A 258-amino-acid polypeptide reads, in one-letter code: MLAVVSPAKNLDYESDLPELNVTQPRLLDNAEELVEVCRQLSPQQLGSLMKISDKLAGLNAARFEEWQRPFNENNARPAMYAFNGDVYTGLDAASLNSEAIGTAQKQLRILSGLYGVLRPLDLMQPYRLEMGTKLDNPKGKNLYEYWGDSITQMLNKDLAELGSSTLVNLASNEYFSAVKPKVLNADIITPVFKDEKNGQYKVISFYAKKARGLMARFILNQKPKSVSDLKEFDANGYSFNEAMSSDKQLVFCRAEQK.

The protein belongs to the UPF0246 family.

This is UPF0246 protein IL2146 from Idiomarina loihiensis (strain ATCC BAA-735 / DSM 15497 / L2-TR).